A 367-amino-acid polypeptide reads, in one-letter code: Histidinol-phosphate aminotransferase 1 (367 aa).

N6-(pyridoxal phosphate)lysine is present on K229.

The protein belongs to the class-II pyridoxal-phosphate-dependent aminotransferase family. Histidinol-phosphate aminotransferase subfamily. In terms of assembly, homodimer. The cofactor is pyridoxal 5'-phosphate.

It catalyses the reaction L-histidinol phosphate + 2-oxoglutarate = 3-(imidazol-4-yl)-2-oxopropyl phosphate + L-glutamate. It functions in the pathway amino-acid biosynthesis; L-histidine biosynthesis; L-histidine from 5-phospho-alpha-D-ribose 1-diphosphate: step 7/9. The polypeptide is Histidinol-phosphate aminotransferase 1 (hisC1) (Mesorhizobium japonicum (strain LMG 29417 / CECT 9101 / MAFF 303099) (Mesorhizobium loti (strain MAFF 303099))).